A 429-amino-acid polypeptide reads, in one-letter code: Glucose-1-phosphate adenylyltransferase (429 aa).

Alpha-D-glucose 1-phosphate-binding positions include Gly-162, 177–178 (EK), and Ser-209.

Belongs to the bacterial/plant glucose-1-phosphate adenylyltransferase family. In terms of assembly, homotetramer.

It carries out the reaction alpha-D-glucose 1-phosphate + ATP + H(+) = ADP-alpha-D-glucose + diphosphate. The protein operates within glycan biosynthesis; glycogen biosynthesis. Its function is as follows. Involved in the biosynthesis of ADP-glucose, a building block required for the elongation reactions to produce glycogen. Catalyzes the reaction between ATP and alpha-D-glucose 1-phosphate (G1P) to produce pyrophosphate and ADP-Glc. The sequence is that of Glucose-1-phosphate adenylyltransferase from Rippkaea orientalis (strain PCC 8801 / RF-1) (Cyanothece sp. (strain PCC 8801)).